A 280-amino-acid chain; its full sequence is DegV domain-containing protein TTE1491 (280 aa).

Residues 4–279 (IAIVTDSLSD…PDAAGVFFEE (276 aa)) enclose the DegV domain. Hexadecanoate contacts are provided by Thr61 and Ser93.

Its function is as follows. May bind long-chain fatty acids, such as palmitate, and may play a role in lipid transport or fatty acid metabolism. The protein is DegV domain-containing protein TTE1491 of Caldanaerobacter subterraneus subsp. tengcongensis (strain DSM 15242 / JCM 11007 / NBRC 100824 / MB4) (Thermoanaerobacter tengcongensis).